We begin with the raw amino-acid sequence, 178 residues long: ATP synthase subunit delta (178 aa).

It belongs to the ATPase delta chain family. F-type ATPases have 2 components, F(1) - the catalytic core - and F(0) - the membrane proton channel. F(1) has five subunits: alpha(3), beta(3), gamma(1), delta(1), epsilon(1). F(0) has three main subunits: a(1), b(2) and c(10-14). The alpha and beta chains form an alternating ring which encloses part of the gamma chain. F(1) is attached to F(0) by a central stalk formed by the gamma and epsilon chains, while a peripheral stalk is formed by the delta and b chains.

The protein resides in the cell membrane. F(1)F(0) ATP synthase produces ATP from ADP in the presence of a proton or sodium gradient. F-type ATPases consist of two structural domains, F(1) containing the extramembraneous catalytic core and F(0) containing the membrane proton channel, linked together by a central stalk and a peripheral stalk. During catalysis, ATP synthesis in the catalytic domain of F(1) is coupled via a rotary mechanism of the central stalk subunits to proton translocation. Its function is as follows. This protein is part of the stalk that links CF(0) to CF(1). It either transmits conformational changes from CF(0) to CF(1) or is implicated in proton conduction. The protein is ATP synthase subunit delta of Streptococcus agalactiae serotype Ia (strain ATCC 27591 / A909 / CDC SS700).